The following is a 419-amino-acid chain: D-galactonate dehydratase family member SEN1436 (419 aa).

2 residues coordinate substrate: glutamine 45 and histidine 129. Tyrosine 160 (proton donor/acceptor) is an active-site residue. Residue aspartate 225 coordinates Mg(2+). The Proton donor/acceptor role is filled by histidine 227. Mg(2+)-binding residues include glutamate 251 and glutamate 277. Residues glutamate 277, arginine 298, histidine 327, aspartate 331, and glutamate 354 each coordinate substrate.

This sequence belongs to the mandelate racemase/muconate lactonizing enzyme family. GalD subfamily. In terms of assembly, homotetramer. Requires Mg(2+) as cofactor.

It catalyses the reaction D-gluconate = 2-dehydro-3-deoxy-D-gluconate + H2O. Its function is as follows. Has low D-gluconate dehydratase activity (in vitro), suggesting that it has no significant role in D-gluconate degradation in vivo. Has no detectable activity with a panel of 70 other acid sugars (in vitro). This chain is D-galactonate dehydratase family member SEN1436, found in Salmonella enteritidis PT4 (strain P125109).